The sequence spans 332 residues: Methionyl-tRNA formyltransferase (332 aa).

Residue 124 to 127 participates in (6S)-5,6,7,8-tetrahydrofolate binding; the sequence is SLLP.

The protein belongs to the Fmt family.

It catalyses the reaction L-methionyl-tRNA(fMet) + (6R)-10-formyltetrahydrofolate = N-formyl-L-methionyl-tRNA(fMet) + (6S)-5,6,7,8-tetrahydrofolate + H(+). Attaches a formyl group to the free amino group of methionyl-tRNA(fMet). The formyl group appears to play a dual role in the initiator identity of N-formylmethionyl-tRNA by promoting its recognition by IF2 and preventing the misappropriation of this tRNA by the elongation apparatus. This chain is Methionyl-tRNA formyltransferase, found in Polynucleobacter necessarius subsp. necessarius (strain STIR1).